The chain runs to 532 residues: Protein DETOXIFICATION 48 (532 aa).

12 helical membrane passes run 65-85 (ISGP…ISML), 95-115 (LAGG…VISG), 136-156 (LGLT…PISF), 174-194 (ISSV…LLSL), 211-231 (VTYS…LLVV), 235-255 (MGVA…VVLL), 279-301 (GWSA…WWWY), 322-342 (GILI…SLGV), 363-383 (IISL…AVLV), 397-417 (ILQL…GNCP), 437-457 (INLG…GFVF), and 464-484 (LWFG…CALL). Positions 496–532 (EELTSQTPGKSPPLLPIASSKSRSTSGTEDMMRTMLV) are disordered. The segment covering 514 to 523 (SSKSRSTSGT) has biased composition (polar residues).

Belongs to the multi antimicrobial extrusion (MATE) (TC 2.A.66.1) family. Highly expressed in shoot apices relative to leaves. At vegetative stages, highly expressed at the stipules. At reproductive stages, most highly expressed in the mature pollen. Also expressed in the tips of sepals.

It is found in the golgi apparatus membrane. It localises to the late endosome membrane. Functionally, functions as a multidrug and toxin extrusion transporter. Contributes to iron homeostasis during stress responses and senescence. Could be involved in specifying the lateral organ initiation rate. May act as a negative regulator of hypocotyl cell elongation in the light. The polypeptide is Protein DETOXIFICATION 48 (Arabidopsis thaliana (Mouse-ear cress)).